The primary structure comprises 134 residues: Interleukin-5 (134 aa).

The signal sequence occupies residues 1–19 (MRMLLHLSLLALGAAYVYA). The O-linked (GalNAc...) threonine glycan is linked to Thr22. Asn47 and Asn90 each carry an N-linked (GlcNAc...) asparagine glycan.

This sequence belongs to the IL-5 family. Homodimer; disulfide-linked. Interacts with IL5RA. Interacts with CSF2RB.

It is found in the secreted. Homodimeric cytokine expressed predominantly by T-lymphocytes and NK cells that plays an important role in the survival, differentiation, and chemotaxis of eosinophils. Also acts on activated and resting B-cells to induce immunoglobulin production, growth, and differentiation. Mechanistically, exerts its biological effects through a receptor composed of IL5RA subunit and the cytokine receptor common subunit beta/CSF2RB. Binding to the receptor leads to activation of various kinases including LYN, SYK and JAK2 and thereby propagates signals through the RAS-MAPK and JAK-STAT5 pathways respectively. This chain is Interleukin-5 (IL5), found in Macaca mulatta (Rhesus macaque).